A 230-amino-acid chain; its full sequence is Claudin-2 (230 aa).

Over 1 to 7 (MASLGLQ) the chain is Cytoplasmic. Residues 8–28 (LVGYVLGLLGLLGTVIAMLLP) traverse the membrane as a helical segment. Topologically, residues 29-81 (SWRTSSYVGASIVTAVGFSKGLWMECATHSTGITQCDIYSTMLGLPADIQAAQ) are extracellular. Cysteines 54 and 64 form a disulfide. A helical transmembrane segment spans residues 82-102 (AMMVTSSAMSSLACIVSVVGM). Residues 103-116 (RCTVFFQESRAKDR) lie on the Cytoplasmic side of the membrane. A helical transmembrane segment spans residues 117–137 (VAVVGGVFFILGGLLGFIPVA). Residues 138–162 (WNLHGILRDFYSPLVPDSMKFEIGE) lie on the Extracellular side of the membrane. Residues 163–183 (ALYLGIISSLFSLIAGIFLCF) traverse the membrane as a helical segment. The Cytoplasmic portion of the chain corresponds to 184 to 230 (SCSPQGNRSNYYDAYQAQPLATRSSPRPGQAPKGKSEFNSYSLTGYV). Positions 205–230 (TRSSPRPGQAPKGKSEFNSYSLTGYV) are disordered. Residue lysine 218 forms a Glycyl lysine isopeptide (Lys-Gly) (interchain with G-Cter in SUMO) linkage. Phosphoserine is present on residues serine 219 and serine 223. Residues 220-230 (EFNSYSLTGYV) show a composition bias toward polar residues. The segment at 229 to 230 (YV) is interaction with TJP1, TJP2 and TJP3.

Belongs to the claudin family. Can form homo- and heteropolymers with other claudins to mediate paracellular barrier and channel functions of tight junctions in response to physiological stimuli. Homopolymers interact with CLDN3, but not CLDN1, homopolymers. Directly interacts with TJP1/ZO-1, TJP2/ZO-2 and TJP3/ZO-3. The disulfide bond is necessary for pore formation, but is not required for correct protein trafficking.

The protein resides in the cell junction. It localises to the tight junction. The protein localises to the cell membrane. It carries out the reaction Na(+)(in) = Na(+)(out). The catalysed reaction is K(+)(in) = K(+)(out). The enzyme catalyses Rb(+)(in) = Rb(+)(out). It catalyses the reaction Li(+)(in) = Li(+)(out). It carries out the reaction Cs(+)(in) = Cs(+)(out). The catalysed reaction is Ca(2+)(in) = Ca(2+)(out). The enzyme catalyses methylamine(out) = methylamine(in). It catalyses the reaction choline(out) = choline(in). It carries out the reaction H2O(in) = H2O(out). Forms paracellular channels: polymerizes in tight junction strands with cation- and water-selective channels through the strands, conveying epithelial permeability in a process known as paracellular tight junction permeability. In intestinal epithelium, allows for sodium and water fluxes from the peritoneal side to the lumen of the intestine to regulate nutrient absorption and clear enteric pathogens as part of mucosal immune response. In kidney, allows passive sodium and calcium reabsorption across proximal tubules from the lumen back to the bloodstream. In the hepatobiliary tract, allows paracellular water and cation fluxes in the hepatic perivenous areas and biliary epithelium to generate bile flow and maintain osmotic gradients. This Bos taurus (Bovine) protein is Claudin-2 (CLDN2).